Reading from the N-terminus, the 331-residue chain is MGAPNDTVIFLRRGKIERREDAFRIGKSKYSAVRTTGIIIAGGAQITTQAVRLALRNEVPIVYLGGNRILGVTVPFSERYATLRLKQYEIASQPSARLAFARPLIASSILARAAVLEFLANETGITGLEDAADEVRSEAERALNAGSTDALRGYEGRAACRYFRALAEVLPDWAFSGRRTRRPPRDPFNAAISFGYAGVLLPVLLSRTVAAGLEPFLGFLHGPRGRRPGLILDLMEEWRALAVDVPVLRRFLDGSLSREMFRWKGDAVLLRDLDAVSAPVLTVLSRVRGGLLEAVDRRIREVRDGVSRQSPPEPLEFDPEDVGVVWDALEV.

Glutamate 155, histidine 221, and glutamate 236 together coordinate Mn(2+).

Belongs to the CRISPR-associated endonuclease Cas1 family. Homodimer, forms a heterotetramer with a Cas2 homodimer. Mg(2+) is required as a cofactor. Mn(2+) serves as cofactor.

In terms of biological role, CRISPR (clustered regularly interspaced short palindromic repeat), is an adaptive immune system that provides protection against mobile genetic elements (viruses, transposable elements and conjugative plasmids). CRISPR clusters contain spacers, sequences complementary to antecedent mobile elements, and target invading nucleic acids. CRISPR clusters are transcribed and processed into CRISPR RNA (crRNA). Acts as a dsDNA endonuclease. Involved in the integration of spacer DNA into the CRISPR cassette. This is CRISPR-associated endonuclease Cas1 from Methanopyrus kandleri (strain AV19 / DSM 6324 / JCM 9639 / NBRC 100938).